Here is a 204-residue protein sequence, read N- to C-terminus: Tic20 family protein Ycf60 (204 aa).

4 helical membrane passes run 5 to 25 (LPSLIIIMLTTFSIILISFII), 87 to 107 (LMPLVIFYVTHPTLAVIIFFI), 133 to 153 (ILLFLINSLLGATFRALPIEF), and 159 to 179 (GLMMCNTLFWFVLSTISYSII).

It belongs to the Tic20 family.

The protein resides in the plastid. Its subcellular location is the chloroplast membrane. This chain is Tic20 family protein Ycf60 (ycf60), found in Gracilaria tenuistipitata var. liui (Red alga).